The primary structure comprises 151 residues: Ribosome-binding factor A (151 aa).

The segment at 116–151 (DAEVARAAANARPAGDPDPYREPRPADDDDEDDEDE) is disordered. Low complexity predominate over residues 120–129 (ARAAANARPA). A compositionally biased stretch (acidic residues) spans 142–151 (DDDDEDDEDE).

This sequence belongs to the RbfA family. In terms of assembly, monomer. Binds 30S ribosomal subunits, but not 50S ribosomal subunits or 70S ribosomes.

Its subcellular location is the cytoplasm. Its function is as follows. One of several proteins that assist in the late maturation steps of the functional core of the 30S ribosomal subunit. Associates with free 30S ribosomal subunits (but not with 30S subunits that are part of 70S ribosomes or polysomes). Required for efficient processing of 16S rRNA. May interact with the 5'-terminal helix region of 16S rRNA. This chain is Ribosome-binding factor A, found in Thermobifida fusca (strain YX).